A 353-amino-acid chain; its full sequence is Holliday junction branch migration complex subunit RuvB (353 aa).

Residues 4 to 185 (ADRLITATGG…FGIVQRLEFY (182 aa)) form a large ATPase domain (RuvB-L) region. ATP is bound by residues Ile-24, Arg-25, Gly-66, Lys-69, Thr-70, Thr-71, 132–134 (EDF), Arg-175, Tyr-185, and Arg-222. Thr-70 provides a ligand contact to Mg(2+). The segment at 186–256 (NIADLSTIVS…TADKALNLLD (71 aa)) is small ATPAse domain (RuvB-S). The segment at 259–353 (EHGFDHQDRR…DDFGDEPVDL (95 aa)) is head domain (RuvB-H). DNA-binding residues include Arg-295, Arg-314, and Arg-319.

Belongs to the RuvB family. As to quaternary structure, homohexamer. Forms an RuvA(8)-RuvB(12)-Holliday junction (HJ) complex. HJ DNA is sandwiched between 2 RuvA tetramers; dsDNA enters through RuvA and exits via RuvB. An RuvB hexamer assembles on each DNA strand where it exits the tetramer. Each RuvB hexamer is contacted by two RuvA subunits (via domain III) on 2 adjacent RuvB subunits; this complex drives branch migration. In the full resolvosome a probable DNA-RuvA(4)-RuvB(12)-RuvC(2) complex forms which resolves the HJ.

Its subcellular location is the cytoplasm. It catalyses the reaction ATP + H2O = ADP + phosphate + H(+). Functionally, the RuvA-RuvB-RuvC complex processes Holliday junction (HJ) DNA during genetic recombination and DNA repair, while the RuvA-RuvB complex plays an important role in the rescue of blocked DNA replication forks via replication fork reversal (RFR). RuvA specifically binds to HJ cruciform DNA, conferring on it an open structure. The RuvB hexamer acts as an ATP-dependent pump, pulling dsDNA into and through the RuvAB complex. RuvB forms 2 homohexamers on either side of HJ DNA bound by 1 or 2 RuvA tetramers; 4 subunits per hexamer contact DNA at a time. Coordinated motions by a converter formed by DNA-disengaged RuvB subunits stimulates ATP hydrolysis and nucleotide exchange. Immobilization of the converter enables RuvB to convert the ATP-contained energy into a lever motion, pulling 2 nucleotides of DNA out of the RuvA tetramer per ATP hydrolyzed, thus driving DNA branch migration. The RuvB motors rotate together with the DNA substrate, which together with the progressing nucleotide cycle form the mechanistic basis for DNA recombination by continuous HJ branch migration. Branch migration allows RuvC to scan DNA until it finds its consensus sequence, where it cleaves and resolves cruciform DNA. In Pseudomonas syringae pv. syringae (strain B728a), this protein is Holliday junction branch migration complex subunit RuvB.